A 297-amino-acid polypeptide reads, in one-letter code: Alpha-tubulin N-acetyltransferase 1 (297 aa).

Positions 1–184 (MDFPYDLNAL…NNFVVFAGFF (184 aa)) constitute an N-acetyltransferase domain. Acetyl-CoA-binding positions include 118–131 (FYVT…GYGS) and 154–163 (SPKFLSFLEK). Residues 226 to 297 (FVRPGGPPHS…SLNRSRLSFH (72 aa)) form a disordered region. The segment covering 230–240 (GGPPHSPPLLP) has biased composition (pro residues). Positions 241 to 264 (SSPQSRSLSVGSSPSRAPLRPAAA) are enriched in low complexity. Polar residues-rich tracts occupy residues 266–278 (VLQQ…SPLN) and 286–297 (TSSLNRSRLSFH).

It belongs to the acetyltransferase ATAT1 family. As to quaternary structure, monomer.

The protein localises to the cytoplasm. It localises to the membrane. It is found in the clathrin-coated pit. The protein resides in the cell junction. Its subcellular location is the focal adhesion. The protein localises to the cell projection. It localises to the axon. It is found in the cytoskeleton. The protein resides in the spindle. The catalysed reaction is L-lysyl-[alpha-tubulin] + acetyl-CoA = N(6)-acetyl-L-lysyl-[alpha-tubulin] + CoA + H(+). Its function is as follows. Specifically acetylates 'Lys-40' in alpha-tubulin on the lumenal side of microtubules. Promotes microtubule destabilization and accelerates microtubule dynamics; this activity may be independent of acetylation activity. Acetylates alpha-tubulin with a slow enzymatic rate, due to a catalytic site that is not optimized for acetyl transfer. Enters the microtubule through each end and diffuses quickly throughout the lumen of microtubules. Acetylates only long/old microtubules because of its slow acetylation rate since it does not have time to act on dynamically unstable microtubules before the enzyme is released. May be involved in neuron development. Acetylates alpha-tubulin in neurons, but not in cilia. The chain is Alpha-tubulin N-acetyltransferase 1 from Danio rerio (Zebrafish).